Here is a 433-residue protein sequence, read N- to C-terminus: Probable mannose-6-phosphate isomerase (433 aa).

Gln-103, His-105, Glu-130, and His-277 together coordinate Zn(2+). Residue Arg-296 is part of the active site.

It belongs to the mannose-6-phosphate isomerase type 1 family. The cofactor is Zn(2+).

The protein localises to the cytoplasm. The enzyme catalyses D-mannose 6-phosphate = D-fructose 6-phosphate. The protein operates within nucleotide-sugar biosynthesis; GDP-alpha-D-mannose biosynthesis; alpha-D-mannose 1-phosphate from D-fructose 6-phosphate: step 1/2. Functionally, involved in the synthesis of the GDP-mannose and dolichol-phosphate-mannose required for a number of critical mannosyl transfer reactions. The protein is Probable mannose-6-phosphate isomerase (PMIH) of Echinococcus multilocularis (Fox tapeworm).